The following is a 503-amino-acid chain: Aspartyl/glutamyl-tRNA(Asn/Gln) amidotransferase subunit B (503 aa).

It belongs to the GatB/GatE family. GatB subfamily. Heterotrimer of A, B and C subunits.

It carries out the reaction L-glutamyl-tRNA(Gln) + L-glutamine + ATP + H2O = L-glutaminyl-tRNA(Gln) + L-glutamate + ADP + phosphate + H(+). It catalyses the reaction L-aspartyl-tRNA(Asn) + L-glutamine + ATP + H2O = L-asparaginyl-tRNA(Asn) + L-glutamate + ADP + phosphate + 2 H(+). In terms of biological role, allows the formation of correctly charged Asn-tRNA(Asn) or Gln-tRNA(Gln) through the transamidation of misacylated Asp-tRNA(Asn) or Glu-tRNA(Gln) in organisms which lack either or both of asparaginyl-tRNA or glutaminyl-tRNA synthetases. The reaction takes place in the presence of glutamine and ATP through an activated phospho-Asp-tRNA(Asn) or phospho-Glu-tRNA(Gln). The protein is Aspartyl/glutamyl-tRNA(Asn/Gln) amidotransferase subunit B of Nocardia farcinica (strain IFM 10152).